We begin with the raw amino-acid sequence, 66 residues long: Large ribosomal subunit protein bL35 (66 aa).

Positions 25–45 (QAAGKRHGMSKRPQKMKRNAR) are disordered. Positions 28–44 (GKRHGMSKRPQKMKRNA) are enriched in basic residues.

The protein belongs to the bacterial ribosomal protein bL35 family.

The chain is Large ribosomal subunit protein bL35 from Rhodospirillum centenum (strain ATCC 51521 / SW).